The following is a 360-amino-acid chain: Phenylalanine--tRNA ligase alpha subunit (360 aa).

A Mg(2+)-binding site is contributed by glutamate 260.

The protein belongs to the class-II aminoacyl-tRNA synthetase family. Phe-tRNA synthetase alpha subunit type 1 subfamily. As to quaternary structure, tetramer of two alpha and two beta subunits. Requires Mg(2+) as cofactor.

The protein resides in the cytoplasm. The catalysed reaction is tRNA(Phe) + L-phenylalanine + ATP = L-phenylalanyl-tRNA(Phe) + AMP + diphosphate + H(+). The sequence is that of Phenylalanine--tRNA ligase alpha subunit from Rhizobium johnstonii (strain DSM 114642 / LMG 32736 / 3841) (Rhizobium leguminosarum bv. viciae).